Here is a 231-residue protein sequence, read N- to C-terminus: MAKLDFDALNSTIRYLMFSVFAVAPGELGEDRADVIDEAATFLKQQEDKGVVVRGLYDVAGLRADADFMIWTHADNVEALQSTYSDFRRTTALGRISDPVWSSVALHRPAEFNKSHIPAFLAGEEPGNYICVYPFVRSYEWYLLPDEERRRMLSEHGMAARGYKDVRANTVPAFALGDYEWILAFEAPELHRIVDLMRDLRATDARRHTREETPFFTGPRISVENLIAKLP.

Lysine 44 participates in a covalent cross-link: Isoglutamyl lysine isopeptide (Lys-Gln) (interchain with Q-Cter in protein Pup). Tyrosine 133 is a catalytic residue. Histidine 156 contributes to the Fe-coproporphyrin III binding site.

The protein belongs to the ChdC family. Type 2 subfamily. The cofactor is Fe-coproporphyrin III.

The catalysed reaction is Fe-coproporphyrin III + 2 H2O2 + 2 H(+) = heme b + 2 CO2 + 4 H2O. It catalyses the reaction Fe-coproporphyrin III + H2O2 + H(+) = harderoheme III + CO2 + 2 H2O. The enzyme catalyses harderoheme III + H2O2 + H(+) = heme b + CO2 + 2 H2O. The protein operates within porphyrin-containing compound metabolism; protoheme biosynthesis. Its function is as follows. Involved in coproporphyrin-dependent heme b biosynthesis. Catalyzes the decarboxylation of Fe-coproporphyrin III (coproheme) to heme b (protoheme IX), the last step of the pathway. The reaction occurs in a stepwise manner with a three-propionate intermediate. The sequence is that of Coproheme decarboxylase from Mycolicibacterium smegmatis (strain ATCC 700084 / mc(2)155) (Mycobacterium smegmatis).